A 338-amino-acid chain; its full sequence is Anthranilate phosphoribosyltransferase (338 aa).

Residues glycine 81, 84-85 (GD), threonine 89, 91-94 (NIST), 109-117 (KHGNRALSS), and alanine 121 contribute to the 5-phospho-alpha-D-ribose 1-diphosphate site. Glycine 81 contributes to the anthranilate binding site. Serine 93 is a binding site for Mg(2+). Asparagine 112 contacts anthranilate. Arginine 167 is an anthranilate binding site. Positions 225 and 226 each coordinate Mg(2+).

Belongs to the anthranilate phosphoribosyltransferase family. In terms of assembly, homodimer. Requires Mg(2+) as cofactor.

The catalysed reaction is N-(5-phospho-beta-D-ribosyl)anthranilate + diphosphate = 5-phospho-alpha-D-ribose 1-diphosphate + anthranilate. It participates in amino-acid biosynthesis; L-tryptophan biosynthesis; L-tryptophan from chorismate: step 2/5. Its function is as follows. Catalyzes the transfer of the phosphoribosyl group of 5-phosphorylribose-1-pyrophosphate (PRPP) to anthranilate to yield N-(5'-phosphoribosyl)-anthranilate (PRA). The chain is Anthranilate phosphoribosyltransferase from Rhizobium etli (strain ATCC 51251 / DSM 11541 / JCM 21823 / NBRC 15573 / CFN 42).